A 456-amino-acid chain; its full sequence is Gustatory receptor for sugar taste 64a (456 aa).

The tract at residues 1-30 (MKGPNLNFRKTPSKDNGVKQVESLARPETP) is disordered. Residues 1 to 91 (MKGPNLNFRK…RESNPRRVRF (91 aa)) are Cytoplasmic-facing. The helical transmembrane segment at 92–114 (AYKSIPMFVTLIFMIATSILFLS) threads the bilayer. Topologically, residues 115–128 (MFTHLLKIGITAKN) are extracellular. A helical membrane pass occupies residues 129 to 150 (FVGLVFFGCVLSAYVVFIRLAK). Gly-131 is a sucrose binding site. The Cytoplasmic portion of the chain corresponds to 151-182 (KWPAVVRIWTRTEIPFTKPPYEIPKRNLSRRV). A helical membrane pass occupies residues 183–205 (QLAALAIIGLSLGEHALYQVSAI). Sucrose is bound by residues Glu-196, His-197, and Tyr-234. Positions 196, 197, 234, 253, and 257 each coordinate D-maltose. Over 206–245 (LSYTRRIQMCANITTVPSFNNYMQTNYDYVFQLLPYSPII) the chain is Extracellular. Residues 246-271 (AVLILLINGACTFVWNYMDLFIMMIS) form a helical membrane-spanning segment. Thr-257 provides a ligand contact to sucrose. The Cytoplasmic portion of the chain corresponds to 272-318 (KGLSYRFEQITTRIRKLEHEEVCESVFIQIREHYVKMCELLEFVDSA). The chain crosses the membrane as a helical span at residues 319-342 (MSSLILLSCVNNLYFVCYQLLNVF). Topologically, residues 343 to 350 (NKLRWPIN) are extracellular. A helical membrane pass occupies residues 351-373 (YIYFWYSLLYLIGRTAFVFLTAA). Tyr-353 lines the sucrose pocket. Tyr-353 serves as a coordination point for D-maltose. Residues 374–421 (DINEESKRGLGVLRRVSSRSWCVEVERLIFQMTTQTVALSGKKFYFLT) are Cytoplasmic-facing. The chain crosses the membrane as a helical span at residues 422-441 (RRLLFGMAGTIVTYELVLLQ). Residues 442–456 (FDEPNRRKGLQPLCA) lie on the Extracellular side of the membrane.

The protein belongs to the insect chemoreceptor superfamily. Gustatory receptor (GR) family. Gr5a subfamily. Homotetramer. In terms of tissue distribution, expressed in Gr5a-expressing sugar-sensing cells.

The protein localises to the cell membrane. One of the few identified sugar gustatory receptors identified so far and which promotes the starvation-induced increase of feeding motivation. Required in combination with Gr64f to detect sucrose, maltose, and glucose. This Drosophila melanogaster (Fruit fly) protein is Gustatory receptor for sugar taste 64a (Gr64a).